Consider the following 221-residue polypeptide: Mediator of RNA polymerase II transcription subunit 19a (221 aa).

Residues Pro-101–Gly-221 form a disordered region. Basic residues predominate over residues Glu-142–Asp-152. The span at Arg-153–His-178 shows a compositional bias: basic and acidic residues. Residues Ser-179 to Lys-188 show a composition bias toward basic residues.

Belongs to the plant Mediator complex subunit 19 family. In terms of assembly, component of the Mediator complex. Interacts with FIB2.

Its subcellular location is the nucleus. Component of the Mediator complex, a coactivator involved in the regulated transcription of nearly all RNA polymerase II-dependent genes. Mediator functions as a bridge to convey information from gene-specific regulatory proteins to the basal RNA polymerase II transcription machinery. The Mediator complex, having a compact conformation in its free form, is recruited to promoters by direct interactions with regulatory proteins and serves for the assembly of a functional preinitiation complex with RNA polymerase II and the general transcription factors. This is Mediator of RNA polymerase II transcription subunit 19a (MED19A) from Arabidopsis thaliana (Mouse-ear cress).